Here is a 202-residue protein sequence, read N- to C-terminus: Translation initiation factor 2 subunit beta (202 aa).

Residues 145–202 (AIEEGGTYELRIDAVGSKGDGIAKIDKYTVFVPGATKGDVVKVKIKKISGNLAFSERA) enclose the TRAM domain.

This sequence belongs to the eIF-2-beta/eIF-5 family. In terms of assembly, heterotrimer composed of an alpha, a beta and a gamma chain.

In terms of biological role, eIF-2 functions in the early steps of protein synthesis by forming a ternary complex with GTP and initiator tRNA. The polypeptide is Translation initiation factor 2 subunit beta (eif2b) (Methanosarcina mazei (strain ATCC BAA-159 / DSM 3647 / Goe1 / Go1 / JCM 11833 / OCM 88) (Methanosarcina frisia)).